We begin with the raw amino-acid sequence, 594 residues long: Potassium-transporting ATPase potassium-binding subunit (594 aa).

Helical transmembrane passes span 3-23 (ADFLGLLLLYLTILLCAAPLL), 67-87 (AVAMLVFNVLGVLAVYALQRL), 136-156 (ALTVQNFVSAATGIAVLIALV), 179-199 (LYVLLPLSFILALALVSQGVV), 287-307 (LEMLAILLIPAALCWTFGEMV), 314-334 (VAILAAMTVLFAGFAASAAYF), 415-435 (GLYGMLAFAILAVFIAGLMIG), 453-473 (VALVILATPALVLAGTAVAVL), 519-539 (VLLGLAMWFGRYTIIVAILAL), and 562-582 (LFVALLVGAVLLVGALTYVPA).

This sequence belongs to the KdpA family. The system is composed of three essential subunits: KdpA, KdpB and KdpC.

The protein localises to the cell inner membrane. In terms of biological role, part of the high-affinity ATP-driven potassium transport (or Kdp) system, which catalyzes the hydrolysis of ATP coupled with the electrogenic transport of potassium into the cytoplasm. This subunit binds the periplasmic potassium ions and delivers the ions to the membrane domain of KdpB through an intramembrane tunnel. The protein is Potassium-transporting ATPase potassium-binding subunit of Bordetella parapertussis (strain 12822 / ATCC BAA-587 / NCTC 13253).